Reading from the N-terminus, the 688-residue chain is Elongation factor G (688 aa).

The tr-type G domain maps to 8–282 (EKTRNIGIIA…AIVDYLPAPC (275 aa)). GTP contacts are provided by residues 17–24 (AHIDAGKT), 81–85 (DTPGH), and 135–138 (NKMD).

This sequence belongs to the TRAFAC class translation factor GTPase superfamily. Classic translation factor GTPase family. EF-G/EF-2 subfamily.

The protein localises to the cytoplasm. Catalyzes the GTP-dependent ribosomal translocation step during translation elongation. During this step, the ribosome changes from the pre-translocational (PRE) to the post-translocational (POST) state as the newly formed A-site-bound peptidyl-tRNA and P-site-bound deacylated tRNA move to the P and E sites, respectively. Catalyzes the coordinated movement of the two tRNA molecules, the mRNA and conformational changes in the ribosome. The polypeptide is Elongation factor G (Onion yellows phytoplasma (strain OY-M)).